Consider the following 373-residue polypeptide: ATP phosphoribosyltransferase regulatory subunit (373 aa).

It belongs to the class-II aminoacyl-tRNA synthetase family. HisZ subfamily. As to quaternary structure, heteromultimer composed of HisG and HisZ subunits.

It localises to the cytoplasm. It functions in the pathway amino-acid biosynthesis; L-histidine biosynthesis; L-histidine from 5-phospho-alpha-D-ribose 1-diphosphate: step 1/9. Functionally, required for the first step of histidine biosynthesis. May allow the feedback regulation of ATP phosphoribosyltransferase activity by histidine. The polypeptide is ATP phosphoribosyltransferase regulatory subunit (Rhizobium johnstonii (strain DSM 114642 / LMG 32736 / 3841) (Rhizobium leguminosarum bv. viciae)).